A 594-amino-acid chain; its full sequence is Tripeptidyl-peptidase sed4 (594 aa).

The signal sequence occupies residues 1–20; the sequence is MLSSTLYAGWLLSLAAPALC. Positions 21-187 are cleaved as a propeptide — removed in mature form; it reads VVQEKLSAVP…AVKLPALPRR (167 aa). Residues N191, N229, and N250 are each glycosylated (N-linked (GlcNAc...) asparagine). A Peptidase S53 domain is found at 197–594; the sequence is LITPDCLVEM…MKLKELVLSL (398 aa). Catalysis depends on charge relay system residues E272, D276, and S494. The Ca(2+) site is built by D536 and I537. An N-linked (GlcNAc...) asparagine glycan is attached at N568. Positions 572 and 574 each coordinate Ca(2+).

Ca(2+) is required as a cofactor. N-glycosylated.

It is found in the secreted. The protein localises to the extracellular space. It carries out the reaction Release of an N-terminal tripeptide from a polypeptide.. In terms of biological role, secreted tripeptidyl-peptidase which degrades proteins at acidic pHs and is involved in virulence. In Aspergillus fumigatus (strain ATCC MYA-4609 / CBS 101355 / FGSC A1100 / Af293) (Neosartorya fumigata), this protein is Tripeptidyl-peptidase sed4 (sed4).